Consider the following 108-residue polypeptide: Small ribosomal subunit protein uS17 (108 aa).

Positions 1–26 are disordered; that stretch reads MREKMAEATETQASETSTRGRPKTRV. A compositionally biased stretch (low complexity) spans 8-17; it reads ATETQASETS.

The protein belongs to the universal ribosomal protein uS17 family. Part of the 30S ribosomal subunit.

In terms of biological role, one of the primary rRNA binding proteins, it binds specifically to the 5'-end of 16S ribosomal RNA. The protein is Small ribosomal subunit protein uS17 of Myxococcus xanthus (strain DK1622).